The primary structure comprises 145 residues: Ribonuclease H (145 aa).

Positions 1-142 (MDTPVYLYTD…ADDLANRGAA (142 aa)) constitute an RNase H type-1 domain. Residues D10, E48, D70, and D134 each coordinate Mg(2+).

This sequence belongs to the RNase H family. Monomer. Requires Mg(2+) as cofactor.

It localises to the cytoplasm. It catalyses the reaction Endonucleolytic cleavage to 5'-phosphomonoester.. Endonuclease that specifically degrades the RNA of RNA-DNA hybrids. This is Ribonuclease H from Neisseria meningitidis serogroup C / serotype 2a (strain ATCC 700532 / DSM 15464 / FAM18).